A 566-amino-acid chain; its full sequence is DDB1- and CUL4-associated factor 10 (566 aa).

Disordered stretches follow at residues 1-72 (MFPF…AERA) and 87-123 (TASA…GAGL). Phosphoserine is present on residues Ser-50, Ser-57, Ser-67, Ser-96, Ser-99, and Ser-100. Over residues 87 to 100 (TASASQAKLSPSSS) the composition is skewed to low complexity. Arg-141 carries the omega-N-methylarginine modification. 4 WD repeats span residues 173–212 (RTHG…HIKT), 216–254 (AHED…TKVC), 258–297 (GHTS…EDGC), and 303–342 (FHTR…KSLE). The span at 354–374 (TTSSSDLTTTSSSSGSRVSGS) shows a compositional bias: low complexity. Residues 354 to 413 (TTSSSDLTTTSSSSGSRVSGSPCHHNDSNSTEKHMSRASQREGVSPRNSLEVLTPEVPGE) form a disordered region. A Phosphoserine modification is found at Ser-356. A compositionally biased stretch (basic and acidic residues) spans 377 to 388 (HHNDSNSTEKHM). 3 WD repeats span residues 415–455 (DRGN…QEGA), 477–515 (VGRG…SELV), and 533–566 (SHND…QPKF).

Belongs to the WD repeat DCAF10 family. In terms of assembly, interacts with DDB1.

It participates in protein modification; protein ubiquitination. Functionally, may function as a substrate receptor for CUL4-DDB1 E3 ubiquitin-protein ligase complex. The sequence is that of DDB1- and CUL4-associated factor 10 (Dcaf10) from Mus musculus (Mouse).